We begin with the raw amino-acid sequence, 381 residues long: Endolytic peptidoglycan transglycosylase RlpA (381 aa).

The first 19 residues, Met1 to Ala19, serve as a signal peptide directing secretion. Cys20 carries the N-palmitoyl cysteine lipid modification. Residue Cys20 is the site of S-diacylglycerol cysteine attachment. The disordered stretch occupies residues Leu196 to Ala274. The segment covering Ser208–Gly218 has biased composition (low complexity). In terms of domain architecture, SPOR spans Ala304 to Ala380.

The protein belongs to the RlpA family.

The protein localises to the cell membrane. Lytic transglycosylase with a strong preference for naked glycan strands that lack stem peptides. The chain is Endolytic peptidoglycan transglycosylase RlpA from Salmonella typhimurium (strain LT2 / SGSC1412 / ATCC 700720).